Consider the following 905-residue polypeptide: Toll-like receptor 3 (905 aa).

A signal peptide spans 1–25 (MKGCSSYLMYSFGGLLSLWILLVSS). The LRRNT domain occupies 26-52 (TNQCTVRYNVADCSHLKLTHIPDDLPS). At 26–705 (TNQCTVRYNV…SCKDSAPFEL (680 aa)) the chain is on the lumenal side. A disulfide bond links Cys29 and Cys38. N-linked (GlcNAc...) asparagine glycosylation is found at Asn53, Asn58, and Asn71. LRR repeat units lie at residues 53 to 74 (NITV…NFTR), 77 to 98 (QLAI…LCQI), 101 to 122 (LLKV…TFVF), 125 to 146 (NLTE…PFKN), 149 to 170 (NLIK…TGVQ), and 173 to 196 (NLQE…EFLG). Cys96 and Cys123 form a disulfide bridge. Asn125 carries N-linked (GlcNAc...) asparagine glycosylation. N-linked (GlcNAc...) asparagine glycosylation is present at Asn197. An LRR 7 repeat occupies 199–220 (SLRKLDLSSNPLKEFSPGCFQT). N-linked (GlcNAc...) asparagine glycosylation is found at Asn248, Asn253, Asn276, and Asn292. LRR repeat units follow at residues 250 to 271 (SIQN…TFSG), 276 to 297 (NLTQ…SFSY), 300 to 321 (SLRY…SFYG), 324 to 345 (NLRY…ASHP), 357 to 378 (YLEY…TFTG), 381 to 401 (SLKY…TNET), 409 to 430 (PLLT…TFSW), 433 to 454 (QLRI…QEWR), 458 to 479 (NIFE…SFAL), 482 to 502 (SLQR…SPSP), 508 to 529 (NLTI…LLEG), 532 to 553 (NLEI…ANPG), 564 to 585 (HLHI…VFKN), 588 to 609 (ELKS…IFDD), and 612 to 633 (SLRS…VFGP). Residues Asn399, Asn414, and Asn425 are each glycosylated (N-linked (GlcNAc...) asparagine). N-linked (GlcNAc...) asparagine glycosylation is present at Asn508. The LRRCT domain occupies 646–699 (NPFDCTCESISWFVNWINQTHTNISELSTHYLCNTPHHYYGFPLKLFDTSSCKD). 2 cysteine pairs are disulfide-bonded: Cys650/Cys678 and Cys652/Cys697. Residues Asn663 and Asn668 are each glycosylated (N-linked (GlcNAc...) asparagine). The chain crosses the membrane as a helical span at residues 706 to 726 (LFIISTSMLLVFILVVLLIHI). The Cytoplasmic segment spans residues 727 to 905 (EGWRISFYWN…VALGSRNSAH (179 aa)). The 144-residue stretch at 755-898 (FEYTAYIIHA…AFHHKLQVAL (144 aa)) folds into the TIR domain. Residue Tyr760 is modified to Phosphotyrosine. Glycyl lysine isopeptide (Lys-Gly) (interchain with G-Cter in ubiquitin) cross-links involve residues Lys766, Lys813, and Lys832. At Tyr859 the chain carries Phosphotyrosine.

The protein belongs to the Toll-like receptor family. In terms of assembly, monomer and homodimer; dimerization is triggered by ligand-binding, the signaling unit is composed of one ds-RNA of around 40 bp and two TLR3 molecules, and lateral clustering of signaling units along the length of the ds-RNA ligand is required for TLR3 signal transduction. Interacts (via transmembrane domain) with UNC93B1; the interaction is required for transport from the ER to the endosomes. Interacts with SRC; upon binding of double-stranded RNA. Interacts with TICAM1 (via the TIR domain) in response to poly(I:C) and this interaction is enhanced in the presence of WDFY1. The tyrosine-phosphorylated form (via TIR domain) interacts with WDFY1 (via WD repeat 2) in response to poly(I:C). Ubiquitinated by RNF170 at Lys-766 via 'Lys-48'-linked ubiquitin chains; leading to TLR3 proteasomal degradation. Post-translationally, TLR3 signaling requires a proteolytic cleavage mediated by cathepsins CTSB and CTSH, the cleavage occurs between amino acids 252 and 346. The cleaved form of TLR3 is the predominant form found in endosomes. Ubiquitinated by TRIM3; leading to recognition and sorting of polyubiquitinated TLR3 by the ESCRT complexes. Ubiquitinated by ZNRF1 via 'Lys-63'-linked ubiquitin chains; leading to TLR3 lysosomal trafficking and degradation. As to expression, highly expressed in lung. After intraperitoneal injection of lipopolysaccharide, highly expressed in brain, heart, kidney, liver, lung and spleen.

The protein localises to the endoplasmic reticulum membrane. The protein resides in the endosome membrane. Its subcellular location is the early endosome. Its function is as follows. Key component of innate and adaptive immunity. TLRs (Toll-like receptors) control host immune response against pathogens through recognition of molecular patterns specific to microorganisms. TLR3 is a nucleotide-sensing TLR which is activated by double-stranded RNA, a sign of viral infection. Acts via the adapter TRIF/TICAM1, leading to NF-kappa-B activation, IRF3 nuclear translocation, cytokine secretion and the inflammatory response. The chain is Toll-like receptor 3 from Mus musculus (Mouse).